The following is a 305-amino-acid chain: Oxygen-dependent coproporphyrinogen-III oxidase (305 aa).

Position 92 (Ser-92) interacts with substrate. Residues His-96 and His-106 each coordinate a divalent metal cation. Residue His-106 is the Proton donor of the active site. 108–110 (NVR) lines the substrate pocket. A divalent metal cation contacts are provided by His-145 and His-175. The tract at residues 239–274 (YVEFNLLFDRGTLFGLQSGGRAESILISLPPLVRWE) is important for dimerization. Residue 257–259 (GGR) participates in substrate binding.

The protein belongs to the aerobic coproporphyrinogen-III oxidase family. In terms of assembly, homodimer. It depends on a divalent metal cation as a cofactor.

Its subcellular location is the cytoplasm. It catalyses the reaction coproporphyrinogen III + O2 + 2 H(+) = protoporphyrinogen IX + 2 CO2 + 2 H2O. It functions in the pathway porphyrin-containing compound metabolism; protoporphyrin-IX biosynthesis; protoporphyrinogen-IX from coproporphyrinogen-III (O2 route): step 1/1. Functionally, involved in the heme biosynthesis. Catalyzes the aerobic oxidative decarboxylation of propionate groups of rings A and B of coproporphyrinogen-III to yield the vinyl groups in protoporphyrinogen-IX. This Xylella fastidiosa (strain Temecula1 / ATCC 700964) protein is Oxygen-dependent coproporphyrinogen-III oxidase.